Reading from the N-terminus, the 455-residue chain is E3 ubiquitin-protein ligase IPI1 (455 aa).

Residues M1–G42 form a disordered region. The segment covering R15–G33 has biased composition (gly residues). The segment at C51–R97 adopts an RING-type; atypical zinc-finger fold. Disordered regions lie at residues L286–P311 and Q426–M455. The segment covering S433–A442 has biased composition (pro residues).

As to quaternary structure, interacts with SPL14/IPA1.

Its subcellular location is the nucleus. It catalyses the reaction S-ubiquitinyl-[E2 ubiquitin-conjugating enzyme]-L-cysteine + [acceptor protein]-L-lysine = [E2 ubiquitin-conjugating enzyme]-L-cysteine + N(6)-ubiquitinyl-[acceptor protein]-L-lysine.. Its pathway is protein modification; protein ubiquitination. Functions as an E3 ligase that promotes polyubiquitination of SPL14/IPA1 for subsequent proteasomal degradation. Regulates plant architecture by modulating SPL14/IPA1 abundance. Promotes the degradation of SPL14/IPA1 in panicles, while it stabilizes SPL14/IPA1 in shoot apices. Ubiquitinates the SPL14/IPA1-mediated complex with 'Lys-48'-linked polyubiquitin in panicles and 'Lys-63'-linked polyubiquitin chains in the shoot apex. This Oryza sativa subsp. japonica (Rice) protein is E3 ubiquitin-protein ligase IPI1.